The chain runs to 354 residues: Methylthioribose-1-phosphate isomerase (354 aa).

Substrate contacts are provided by residues 58–60 (RGA), Arg101, and Gln204. The active-site Proton donor is Asp245. A substrate-binding site is contributed by 255–256 (NK).

Belongs to the eIF-2B alpha/beta/delta subunits family. MtnA subfamily.

The catalysed reaction is 5-(methylsulfanyl)-alpha-D-ribose 1-phosphate = 5-(methylsulfanyl)-D-ribulose 1-phosphate. It participates in amino-acid biosynthesis; L-methionine biosynthesis via salvage pathway; L-methionine from S-methyl-5-thio-alpha-D-ribose 1-phosphate: step 1/6. Its function is as follows. Catalyzes the interconversion of methylthioribose-1-phosphate (MTR-1-P) into methylthioribulose-1-phosphate (MTRu-1-P). The polypeptide is Methylthioribose-1-phosphate isomerase (Xanthomonas campestris pv. campestris (strain ATCC 33913 / DSM 3586 / NCPPB 528 / LMG 568 / P 25)).